We begin with the raw amino-acid sequence, 249 residues long: MENLNHCPLEDIKVNPWKTPQSTARVITLRVEDPNEINNLLSINEIDNPNYILQAIMLANAFQNALVPTSTDFGDALRFSMAKGLEIANTITPMGAVVSYVDQNVTQTNNQVSVMINKVLEVLKTVLGVALSGSVIDQLTAAVTNTFTNLNTQKNEAWIFWGKETANQTNYTYNVLFAIQNAQTGGVMYCVPVGFEIKVSAVKEQVLFFTIQDSASYNVNIQSLKFAQPLVSSSQYPIADLTSAINGTL.

Belongs to the cyt1/cyt2 endotoxin family. In terms of processing, active after proteolytic processing.

Its function is as follows. Kills the larvae of dipteran insects by making pores in the epithelial cell membrane of the insect midgut. Acts on mosquitos and black flies. The chain is Type-1Aa cytolytic delta-endotoxin (cyt1Aa) from Bacillus thuringiensis subsp. morrisoni.